Reading from the N-terminus, the 229-residue chain is MANELTWHDVLAEEKQQPYFLNTLQTVASERQSGVTIYPPQKDVFNAFRFTELGDVKVVILGQDPYHGPGQAHGLAFSVRPGIATPPSLLNMYKELENTIPGFTRPNHGYLESWARQGVLLLNTVLTVRAGQAHSHASLGWETFTDKVISLINQHREGVVFLLWGSHAQKKGAIIDKQRHHVLKAPHPSPLSAHRGFFGCNHFVLANQWLEQRGETPIDWMPVLPAESE.

D64 (proton acceptor) is an active-site residue.

Belongs to the uracil-DNA glycosylase (UDG) superfamily. UNG family.

Its subcellular location is the cytoplasm. The enzyme catalyses Hydrolyzes single-stranded DNA or mismatched double-stranded DNA and polynucleotides, releasing free uracil.. Excises uracil residues from the DNA which can arise as a result of misincorporation of dUMP residues by DNA polymerase or due to deamination of cytosine. In Escherichia coli O45:K1 (strain S88 / ExPEC), this protein is Uracil-DNA glycosylase.